A 358-amino-acid chain; its full sequence is Probable D-xylulose reductase A (358 aa).

Residues Cys-47, His-72, and Glu-73 each contribute to the Zn(2+) site. Residue 182–187 (GAGPVG) coordinates NAD(+).

The protein belongs to the zinc-containing alcohol dehydrogenase family. Requires Zn(2+) as cofactor.

The enzyme catalyses xylitol + NAD(+) = D-xylulose + NADH + H(+). It participates in carbohydrate degradation; L-arabinose degradation via L-arabinitol; D-xylulose 5-phosphate from L-arabinose (fungal route): step 4/5. In terms of biological role, xylitol dehydrogenase which catalyzes the conversion of xylitol to D-xylulose. Xylose is a major component of hemicelluloses such as xylan. Most fungi utilize D-xylose via three enzymatic reactions, xylose reductase (XR), xylitol dehydrogenase (XDH), and xylulokinase, to form xylulose 5-phosphate, which enters pentose phosphate pathway. This is Probable D-xylulose reductase A (xdhA) from Aspergillus fumigatus (strain CBS 144.89 / FGSC A1163 / CEA10) (Neosartorya fumigata).